The sequence spans 331 residues: Protein PER1 homolog (331 aa).

The signal sequence occupies residues 1-24 (MRVLRNFTIFFLFTALSLFRQISA). At 25–100 (SAGDLHPVYV…QYHGKWYFIR (76 aa)) the chain is on the lumenal side. A helical transmembrane segment spans residues 101-121 (VFGIQELFSVFFSMLNFMIHY). Topologically, residues 122–139 (NGYHIMRRCIPDEHPAKR) are cytoplasmic. The chain crosses the membrane as a helical span at residues 140–160 (LCLSWAIVGMNAWVWSSVFHI). Topologically, residues 161–168 (RDTPITEK) are lumenal. The chain crosses the membrane as a helical span at residues 169–189 (LDYFSAGAFVLFGSYCTLILM). The Cytoplasmic portion of the chain corresponds to 190–199 (LRLDQLPGGK). Residues 200 to 220 (LLCWIIGVIFIAAFIAHVSYL) form a helical membrane-spanning segment. The Lumenal portion of the chain corresponds to 221–232 (SFYSFDYGYNMK). Residues 233–250 (ANVAVGLVQNILWYYYSW) form a helical membrane-spanning segment. The Cytoplasmic segment spans residues 251-263 (SNRNSGLYWTRWP). The chain crosses the membrane as a helical span at residues 264–284 (AYIVTSLMLATSLELFDFSPI). Residues 285–289 (ANLID) lie on the Lumenal side of the membrane. A helical transmembrane segment spans residues 290–310 (AHALWHLSTVPITHYLYGFVV). The Cytoplasmic segment spans residues 311–331 (RKCSYDLTKGTFKIKAYDSSR).

The protein belongs to the PGAP3/PER1 family.

The protein localises to the endoplasmic reticulum membrane. The protein resides in the vacuole membrane. In terms of biological role, involved in the lipid remodeling steps of GPI-anchor maturation. Lipid remodeling steps consist in the generation of 2 saturated fatty chains at the sn-2 position of GPI-anchors proteins. Required for phospholipase A2 activity that removes an acyl-chain at the sn-2 position of GPI-anchors during the remodeling of GPI. Required for efficient transport of GPI-anchor proteins. The protein is Protein PER1 homolog of Schizosaccharomyces pombe (strain 972 / ATCC 24843) (Fission yeast).